The sequence spans 71 residues: uncharacterized protein (71 aa).

The tract at residues 1–71 (MLFETLKSLS…AFFSRPFYSE (71 aa)) is disordered. Over residues 7–33 (KSLSQQNGGQFSDEQSFESPISSSFNG) the composition is skewed to polar residues. Positions 35-65 (SMPFGSPSSTMSSSYKGNTNSSTKSSSAFFS) are enriched in low complexity.

This is an uncharacterized protein from Dictyostelium discoideum (Social amoeba).